Consider the following 104-residue polypeptide: NADH-quinone oxidoreductase subunit K (104 aa).

Helical transmembrane passes span 4–24 (VPAS…LFGA), 31–51 (VIVL…LVAF), and 67–87 (LFTM…LIAL).

This sequence belongs to the complex I subunit 4L family. In terms of assembly, NDH-1 is composed of 14 different subunits. Subunits NuoA, H, J, K, L, M, N constitute the membrane sector of the complex.

It localises to the cell membrane. It carries out the reaction a quinone + NADH + 5 H(+)(in) = a quinol + NAD(+) + 4 H(+)(out). In terms of biological role, NDH-1 shuttles electrons from NADH, via FMN and iron-sulfur (Fe-S) centers, to quinones in the respiratory chain. The immediate electron acceptor for the enzyme in this species is believed to be a menaquinone. Couples the redox reaction to proton translocation (for every two electrons transferred, four hydrogen ions are translocated across the cytoplasmic membrane), and thus conserves the redox energy in a proton gradient. The chain is NADH-quinone oxidoreductase subunit K from Bacillus cytotoxicus (strain DSM 22905 / CIP 110041 / 391-98 / NVH 391-98).